The primary structure comprises 318 residues: Mitochondrial thiamine pyrophosphate carrier 1 (318 aa).

A run of 6 helical transmembrane segments spans residues 12–28 (GTRRQVVLAGGIAGLVS), 91–107 (LMYVCYGAIQFAAYRTT), 125–141 (SFVAGATAGGLATASTY), 181–197 (GCSAAVGQIVPYMGLFF), 221–237 (AAGVVASVLAKTGVFPL), and 284–301 (GLTVSLFKAAPASAVTMW). Solcar repeat units lie at residues 12–110 (GTRR…TTQA), 120–206 (PPPA…LRPV), and 214–309 (PFGS…SLHY).

This sequence belongs to the mitochondrial carrier (TC 2.A.29) family.

The protein resides in the mitochondrion inner membrane. Mitochondrial transporter that mediates uptake of thiamine pyrophosphate (ThPP) into mitochondria. This is Mitochondrial thiamine pyrophosphate carrier 1 (tpc1) from Aspergillus oryzae (strain ATCC 42149 / RIB 40) (Yellow koji mold).